The following is a 292-amino-acid chain: 4-hydroxy-tetrahydrodipicolinate synthase (292 aa).

Thr-50 provides a ligand contact to pyruvate. Tyr-139 serves as the catalytic Proton donor/acceptor. Lys-167 functions as the Schiff-base intermediate with substrate in the catalytic mechanism. Ile-208 is a pyruvate binding site.

This sequence belongs to the DapA family. In terms of assembly, homotetramer; dimer of dimers.

The protein resides in the cytoplasm. The enzyme catalyses L-aspartate 4-semialdehyde + pyruvate = (2S,4S)-4-hydroxy-2,3,4,5-tetrahydrodipicolinate + H2O + H(+). The protein operates within amino-acid biosynthesis; L-lysine biosynthesis via DAP pathway; (S)-tetrahydrodipicolinate from L-aspartate: step 3/4. Its function is as follows. Catalyzes the condensation of (S)-aspartate-beta-semialdehyde [(S)-ASA] and pyruvate to 4-hydroxy-tetrahydrodipicolinate (HTPA). The chain is 4-hydroxy-tetrahydrodipicolinate synthase from Oenococcus oeni (strain ATCC BAA-331 / PSU-1).